A 1103-amino-acid polypeptide reads, in one-letter code: Voltage-dependent calcium channel subunit alpha-2/delta-1 (1103 aa).

The N-terminal stretch at 1–24 (MAAGCLLALTLTLFQSLLIGPSSE) is a signal peptide. The Extracellular segment spans residues 25–1073 (EPFPSAVTIK…VLEDYTDCGG (1049 aa)). Asn-92 carries an N-linked (GlcNAc...) asparagine glycan. The residue at position 119 (Ser-119) is a Phosphoserine. N-linked (GlcNAc...) asparagine glycans are attached at residues Asn-136 and Asn-184. The VWFA domain maps to 253–430 (DMLILVDVSG…INTQEYLDVL (178 aa)). A divalent metal cation-binding residues include Asp-259, Ser-261, and Ser-263. The MIDAS-like motif signature appears at 259-263 (DVSGS). N-linked (GlcNAc...) asparagine glycans are attached at residues Asn-324, Asn-348, Asn-468, Asn-475, Asn-604, Asn-613, Asn-675, Asn-781, Asn-824, Asn-888, Asn-895, Asn-985, and Asn-998. An intrachain disulfide couples Cys-404 to Cys-1059. One can recognise a Cache domain in the interval 446–556 (WTNVYLDALE…NIQNPKSQEP (111 aa)). Residues 1074 to 1094 (VSGLNPSLWYIIGIQFLLLWL) traverse the membrane as a helical segment. Over 1095–1103 (VSGSTHRLL) the chain is Cytoplasmic.

This sequence belongs to the calcium channel subunit alpha-2/delta family. As to quaternary structure, dimer formed of alpha-2-1 and delta-1 chains; disulfide-linked. Voltage-dependent calcium channels are multisubunit complexes, consisting of alpha-1 (CACNA1), alpha-2 (CACNA2D), beta (CACNB) and delta (CACNA2D) subunits in a 1:1:1:1 ratio. Proteolytically processed into subunits alpha-2-1 and delta-1 that are disulfide-linked. Isoform 1 is expressed in skeletal muscle. Isoform 2 is expressed in the central nervous system. Isoform 2, isoform 4 and isoform 5 are expressed in neuroblastoma cells. Isoform 3, isoform 4 and isoform 5 are expressed in the aorta.

It is found in the membrane. It localises to the cell membrane. The alpha-2/delta subunit of voltage-dependent calcium channels regulates calcium current density and activation/inactivation kinetics of the calcium channel. Plays an important role in excitation-contraction coupling. This is Voltage-dependent calcium channel subunit alpha-2/delta-1 (CACNA2D1) from Homo sapiens (Human).